Here is a 560-residue protein sequence, read N- to C-terminus: Long-chain-fatty-acid--CoA ligase (560 aa).

It belongs to the ATP-dependent AMP-binding enzyme family.

It catalyses the reaction a long-chain fatty acid + ATP + CoA = a long-chain fatty acyl-CoA + AMP + diphosphate. The sequence is that of Long-chain-fatty-acid--CoA ligase (lcfA) from Bacillus subtilis (strain 168).